The chain runs to 128 residues: MSLRLDTTPSCNSARPLHALQVLLLLSLLLTALASSTKGQTKRNLAKGKEESLDSDLYAELRCMCIKTTSGIHPKNIQSLEVIGKGTHCNQVEVIATLKDGRKICLDPDAPRIKKIVQKKLAGDESAD.

The first 34 residues, 1–34 (MSLRLDTTPSCNSARPLHALQVLLLLSLLLTALA), serve as a signal peptide directing secretion. Intrachain disulfides connect Cys-63–Cys-89 and Cys-65–Cys-105.

Belongs to the intercrine alpha (chemokine CxC) family. Beta-thromboglobulin is a homotetramer. In terms of processing, proteolytic removal of residues 1-9 produces the active peptide connective tissue-activating peptide III (CTAP-III) (low-affinity platelet factor IV (LA-PF4)). Proteolytic removal of residues 1-13 produces the active peptide beta-thromboglobulin, which is released from platelets along with platelet factor 4 and platelet-derived growth factor. Post-translationally, NAP-2(1-66) is produced by proteolytical processing, probably after secretion by leukocytes other than neutrophils. In terms of processing, NAP-2(73) and NAP-2(74) seem not be produced by proteolytical processing of secreted precursors but are released in an active form from platelets.

The protein resides in the secreted. LA-PF4 stimulates DNA synthesis, mitosis, glycolysis, intracellular cAMP accumulation, prostaglandin E2 secretion, and synthesis of hyaluronic acid and sulfated glycosaminoglycan. It also stimulates the formation and secretion of plasminogen activator by human synovial cells. NAP-2 is a ligand for CXCR1 and CXCR2, and NAP-2, NAP-2(73), NAP-2(74), NAP-2(1-66), and most potent NAP-2(1-63) are chemoattractants and activators for neutrophils. TC-1 and TC-2 are antibacterial proteins, in vitro released from activated platelet alpha-granules. CTAP-III(1-81) is more potent than CTAP-III desensitize chemokine-induced neutrophil activation. This chain is Platelet basic protein (PPBP), found in Homo sapiens (Human).